Consider the following 314-residue polypeptide: uncharacterized protein (314 aa).

Disordered regions lie at residues 170-203 (RSSMNSQSQMSESSFPTPIDPPPRIPHPPLNPDE) and 258-314 (VGES…PKKR). The segment covering 171-186 (SSMNSQSQMSESSFPT) has biased composition (low complexity). The span at 187–200 (PIDPPPRIPHPPLN) shows a compositional bias: pro residues. Residues 261–272 (SSRQGENTQNVH) show a composition bias toward polar residues. The segment covering 289–303 (RFKDDARKSNEDEHM) has biased composition (basic and acidic residues).

This is an uncharacterized protein from Arabidopsis thaliana (Mouse-ear cress).